A 499-amino-acid chain; its full sequence is tRNA (guanine(37)-N(1))-methyltransferase (499 aa).

A mitochondrion-targeting transit peptide spans 1-44; sequence MKIALPVFQKFNRLISSCKMSGVFPYNPPVNRQMRELDRSFFIT. S-adenosyl-L-methionine-binding positions include His-268, 307-308, 335-336, and Asn-399; these read DL and DG.

Belongs to the class I-like SAM-binding methyltransferase superfamily. TRM5/TYW2 family. As to quaternary structure, monomer.

It is found in the mitochondrion matrix. The protein localises to the nucleus. The protein resides in the cytoplasm. It catalyses the reaction guanosine(37) in tRNA + S-adenosyl-L-methionine = N(1)-methylguanosine(37) in tRNA + S-adenosyl-L-homocysteine + H(+). In terms of biological role, specifically methylates the N1 position of guanosine-37 in various cytoplasmic and mitochondrial tRNAs. Methylation is not dependent on the nature of the nucleoside 5' of the target nucleoside. This is the first step in the biosynthesis of wybutosine (yW), a modified base adjacent to the anticodon of tRNAs and required for accurate decoding. Postspliced cytoplasmic tRNAs are imported into the nucleus, where this first step seems to take place, after which they are reexported to the cytoplasm, where the yW sythesis is completed by cytoplasmic enzymes. This Saccharomyces cerevisiae (strain ATCC 204508 / S288c) (Baker's yeast) protein is tRNA (guanine(37)-N(1))-methyltransferase.